Here is a 459-residue protein sequence, read N- to C-terminus: Cysteine--tRNA ligase (459 aa).

Residue C29 participates in Zn(2+) binding. The short motif at 31 to 41 (PTVYDRAHIGN) is the 'HIGH' region element. Residues C209, H234, and E238 each coordinate Zn(2+). The 'KMSKS' region signature appears at 267-271 (KMSKS). Residue K270 coordinates ATP.

The protein belongs to the class-I aminoacyl-tRNA synthetase family. In terms of assembly, monomer. Requires Zn(2+) as cofactor.

Its subcellular location is the cytoplasm. The enzyme catalyses tRNA(Cys) + L-cysteine + ATP = L-cysteinyl-tRNA(Cys) + AMP + diphosphate. The protein is Cysteine--tRNA ligase of Rhodospirillum rubrum (strain ATCC 11170 / ATH 1.1.1 / DSM 467 / LMG 4362 / NCIMB 8255 / S1).